A 488-amino-acid chain; its full sequence is Phenylalanine--tRNA ligase alpha subunit (488 aa).

L-phenylalanine contacts are provided by residues Thr-315, 354-356 (QLD), Phe-394, and Phe-419.

It belongs to the class-II aminoacyl-tRNA synthetase family. Phe-tRNA synthetase alpha subunit type 2 subfamily. In terms of assembly, tetramer of two alpha and two beta subunits. Mg(2+) is required as a cofactor.

It is found in the cytoplasm. It carries out the reaction tRNA(Phe) + L-phenylalanine + ATP = L-phenylalanyl-tRNA(Phe) + AMP + diphosphate + H(+). This is Phenylalanine--tRNA ligase alpha subunit from Pyrobaculum arsenaticum (strain DSM 13514 / JCM 11321 / PZ6).